The sequence spans 363 residues: S-adenosylmethionine:tRNA ribosyltransferase-isomerase (363 aa).

This sequence belongs to the QueA family. Monomer.

The protein localises to the cytoplasm. The enzyme catalyses 7-aminomethyl-7-carbaguanosine(34) in tRNA + S-adenosyl-L-methionine = epoxyqueuosine(34) in tRNA + adenine + L-methionine + 2 H(+). It participates in tRNA modification; tRNA-queuosine biosynthesis. In terms of biological role, transfers and isomerizes the ribose moiety from AdoMet to the 7-aminomethyl group of 7-deazaguanine (preQ1-tRNA) to give epoxyqueuosine (oQ-tRNA). This is S-adenosylmethionine:tRNA ribosyltransferase-isomerase from Synechococcus sp. (strain RCC307).